A 193-amino-acid polypeptide reads, in one-letter code: Hypoxanthine/guanine phosphoribosyltransferase (193 aa).

The protein belongs to the purine/pyrimidine phosphoribosyltransferase family. Archaeal HPRT subfamily. As to quaternary structure, homodimer.

It localises to the cytoplasm. The catalysed reaction is IMP + diphosphate = hypoxanthine + 5-phospho-alpha-D-ribose 1-diphosphate. It catalyses the reaction GMP + diphosphate = guanine + 5-phospho-alpha-D-ribose 1-diphosphate. It participates in purine metabolism; IMP biosynthesis via salvage pathway; IMP from hypoxanthine: step 1/1. In terms of biological role, catalyzes a salvage reaction resulting in the formation of IMP that is energically less costly than de novo synthesis. This is Hypoxanthine/guanine phosphoribosyltransferase from Methanothermobacter thermautotrophicus (strain ATCC 29096 / DSM 1053 / JCM 10044 / NBRC 100330 / Delta H) (Methanobacterium thermoautotrophicum).